We begin with the raw amino-acid sequence, 777 residues long: Cullin-3 (777 aa).

The segment at 568-596 (YPPPKASMSNEENGPGPSSSGESMKERKP) is disordered. Positions 576–589 (SNEENGPGPSSSGE) are enriched in low complexity. In terms of domain architecture, Cullin neddylation spans 707-769 (DRKLEVEAAI…REYLARDEHD (63 aa)). A Glycyl lysine isopeptide (Lys-Gly) (interchain with G-Cter in NEDD8) cross-link involves residue K721.

This sequence belongs to the cullin family. As to quaternary structure, probable component of multiple cullin-RING-based BCB (BTB-CUL3-BTB) E3 ubiquitin-protein ligase complexes formed by cul-3, rbx-1 and a variable BTB domain-containing protein acting as both, adapter to cullin and substrate recognition component. Interacts with bath-15, bath-40, bath-41, bath-42, C17F4.8, tag-303, D2045.8, F57C2.1, ZC239.15 and B0281.5. Interacts with mel-26 (via BTB domain). Interacts with dcn-1. In terms of processing, neddylated. Deneddylated via its interaction with the COP9 signalosome (CSN) complex.

The protein resides in the cytoplasm. It localises to the nucleus. It participates in protein modification; protein ubiquitination. Functionally, probable core component of multiple cullin-RING-based BCB (BTB-CUL3-BTB) E3 ubiquitin-protein ligase complexes which mediate the ubiquitination and subsequent proteasomal degradation of target proteins. Probably acts as a scaffold protein which may contribute to catalysis through positioning of the substrate and the ubiquitin-conjugating enzyme. Required to target mei-3/katanin for degradation at the meiosis to mitosis transition via its neddylation and deneddylation. Functions in ubiquitin-mediated degradation of CKIs to target cki-1 for degradation. Regulates microtubule stability in the early embryo. In body wall muscles, involved in the organization of myosin thick filaments, likely by regulating the degradation of microtubule severing protein mei-1 downstream of unc-89. Together with spop-1, may promote the ubiquitination and proteasomal degradation of target bromodomain-containing proteins such as bet-1. This Caenorhabditis elegans protein is Cullin-3.